A 475-amino-acid polypeptide reads, in one-letter code: Ribulose bisphosphate carboxylase large chain (475 aa).

Residues 1–2 (MS) constitute a propeptide that is removed on maturation. Residue proline 3 is modified to N-acetylproline. Lysine 14 carries the N6,N6,N6-trimethyllysine modification. Positions 123 and 173 each coordinate substrate. The active-site Proton acceptor is the lysine 175. Lysine 177 contacts substrate. Lysine 201, aspartate 203, and glutamate 204 together coordinate Mg(2+). Lysine 201 bears the N6-carboxylysine mark. Histidine 294 acts as the Proton acceptor in catalysis. The substrate site is built by arginine 295, histidine 327, and serine 379.

This sequence belongs to the RuBisCO large chain family. Type I subfamily. Heterohexadecamer of 8 large chains and 8 small chains; disulfide-linked. The disulfide link is formed within the large subunit homodimers. Requires Mg(2+) as cofactor. In terms of processing, the disulfide bond which can form in the large chain dimeric partners within the hexadecamer appears to be associated with oxidative stress and protein turnover.

It localises to the plastid. It is found in the chloroplast. It carries out the reaction 2 (2R)-3-phosphoglycerate + 2 H(+) = D-ribulose 1,5-bisphosphate + CO2 + H2O. The catalysed reaction is D-ribulose 1,5-bisphosphate + O2 = 2-phosphoglycolate + (2R)-3-phosphoglycerate + 2 H(+). Its function is as follows. RuBisCO catalyzes two reactions: the carboxylation of D-ribulose 1,5-bisphosphate, the primary event in carbon dioxide fixation, as well as the oxidative fragmentation of the pentose substrate in the photorespiration process. Both reactions occur simultaneously and in competition at the same active site. The chain is Ribulose bisphosphate carboxylase large chain from Atriplex rosea (Red orache).